The following is a 394-amino-acid chain: MNKYKRIFLVVMDSVGIGEAPDAEQFGDLGSDTIGHIAEHMNGLHMPNMVKLGLGNIREMKGISKVEKPLGYYTKMQEKSTGKDTMTGHWEIMGLYIDTPFQVFPEGFPKELLDELEEKTGRKIIGNKPASGTEVLVELGQEQMETGSLIVYTSADSVLQIAAHEEVVPLEELYKICKIARELTLDEKYMVGRVIARPFVGEPGNFTRTPNRHDYALKPFGRTVMNELKDSDYDVIAIGKIADIYDGEGVTESLRTKSNMDGMDKLVDTLNMDFTGISFLNLVDFDALFGHRRDPQGYGEALQEYDARLPEVFEKLKEDDLLLITADHGNDPVHPGTDHTREYVPLLAYSPSMKEGGQELSLRQTFADIGATVAENFNVKMPEHGTSFLNELKK.

Residues aspartate 13, aspartate 286, histidine 291, aspartate 327, histidine 328, and histidine 339 each coordinate Mn(2+).

It belongs to the phosphopentomutase family. Mn(2+) is required as a cofactor.

The protein resides in the cytoplasm. It catalyses the reaction 2-deoxy-alpha-D-ribose 1-phosphate = 2-deoxy-D-ribose 5-phosphate. The catalysed reaction is alpha-D-ribose 1-phosphate = D-ribose 5-phosphate. It functions in the pathway carbohydrate degradation; 2-deoxy-D-ribose 1-phosphate degradation; D-glyceraldehyde 3-phosphate and acetaldehyde from 2-deoxy-alpha-D-ribose 1-phosphate: step 1/2. In terms of biological role, isomerase that catalyzes the conversion of deoxy-ribose 1-phosphate (dRib-1-P) and ribose 1-phosphate (Rib-1-P) to deoxy-ribose 5-phosphate (dRib-5-P) and ribose 5-phosphate (Rib-5-P), respectively. The sequence is that of Phosphopentomutase from Bacillus mycoides (strain KBAB4) (Bacillus weihenstephanensis).